We begin with the raw amino-acid sequence, 142 residues long: Lysozyme X (142 aa).

Positions 1-19 (MRALLGICVLALVTPAVLG) are cleaved as a signal peptide. Residues 20–142 (RTMDRCSLAR…YLPPIDDCFV (123 aa)) form the C-type lysozyme domain. Cystine bridges form between cysteine 25-cysteine 140, cysteine 46-cysteine 130, cysteine 81-cysteine 97, and cysteine 93-cysteine 111. Active-site residues include glutamate 51 and aspartate 69.

This sequence belongs to the glycosyl hydrolase 22 family. In terms of tissue distribution, found in the midgut.

The enzyme catalyses Hydrolysis of (1-&gt;4)-beta-linkages between N-acetylmuramic acid and N-acetyl-D-glucosamine residues in a peptidoglycan and between N-acetyl-D-glucosamine residues in chitodextrins.. Unlikely to play an active role in the humoral immune defense. May have a function in the digestion of bacteria in the food. May be involved in the clearance of bacteria from the larval gut before metamorphosis. The protein is Lysozyme X (LysX) of Drosophila melanogaster (Fruit fly).